A 641-amino-acid polypeptide reads, in one-letter code: Bifunctional protein glk (641 aa).

The disordered stretch occupies residues 1–21; that stretch reads MSTGAQTKAAEASQHADGPRL. A glucokinase region spans residues 1 to 340; the sequence is MSTGAQTKAA…QLSNRTGGAS (340 aa). Residue 23 to 28 participates in ATP binding; it reads ADVGGT. The region spanning 341–417 is the HTH rpiR-type domain; it reads SAVFERIRQM…LKLATGLTGT (77 aa). The interval 341-641 is putative HTH-type transcriptional regulator; the sequence is SAVFERIRQM…SHGAAPAAKE (301 aa). Residues 377–396 constitute a DNA-binding region (H-T-H motif); it reads IVDIARKADVSQPTVIRFCR. In terms of domain architecture, SIS spans 461-600; that stretch reads AIDILNNARR…AVGVAIRRAS (140 aa). A helical membrane pass occupies residues 576 to 596; that stretch reads SMISRILHLVMIDILAVGVAI.

In the N-terminal section; belongs to the bacterial glucokinase family.

The protein resides in the membrane. The enzyme catalyses D-glucose + ATP = D-glucose 6-phosphate + ADP + H(+). This Burkholderia thailandensis (strain ATCC 700388 / DSM 13276 / CCUG 48851 / CIP 106301 / E264) protein is Bifunctional protein glk (glk).